A 439-amino-acid chain; its full sequence is Homeobox protein ceh-32 (439 aa).

The segment at residues 183–243 (WDGEQKTHCF…KNRRQRDRAA (61 aa)) is a DNA-binding region (homeobox). Disordered regions lie at residues 253-293 (GVEL…SHIP), 344-365 (EEEN…KKRS), and 379-439 (VSPS…SQSE). 2 stretches are compositionally biased toward acidic residues: residues 264 to 274 (SDSDDDFEDSM) and 344 to 358 (EEEN…EADI). Residues 379–392 (VSPSQCSPCSNESL) are compositionally biased toward polar residues. The segment covering 398-428 (VKTEEVKKEDDEAAEEDSRSVKSETSEDPKH) has biased composition (basic and acidic residues).

This sequence belongs to the SIX/Sine oculis homeobox family. As to quaternary structure, interacts with gmn-1. As to expression, expressed in the posterior gonad. Expressed in some cells in the head that are probably neurons. Expressed in the dorsal and ventral neuron RMD pair and the inner labial neuron class IL1. Not expressed in BAG neurons.

It is found in the nucleus. In terms of biological role, transcription factor which binds a motif with the core sequence 5'-GTATCA-3'. Plays a role in head morphogenesis. Involved in embryonic development. Required for cell specification of the RIA interneurons. May cooperate with the transcription factor vab-3 and phosphatase eya-1 to repress transcription factor ets-5 expression in non BAG neuronal cells. The protein is Homeobox protein ceh-32 of Caenorhabditis elegans.